A 607-amino-acid chain; its full sequence is Kelch repeat and BTB domain-containing protein 3 (607 aa).

The 68-residue stretch at 48 to 115 folds into the BTB domain; it reads YDFKIIMKEE…AYTGKTRITD (68 aa). In terms of domain architecture, BACK spans 150 to 250; that stretch reads CLHLLSLSDS…QLSEDTLQDY (101 aa). Kelch repeat units follow at residues 291 to 337, 339 to 390, 400 to 450, 452 to 502, and 548 to 595; these read KYIF…SSYG, KIFL…TPRT, RLFV…ACQN, IYVL…KAVP, and KIYI…VIQF.

The polypeptide is Kelch repeat and BTB domain-containing protein 3 (Mus musculus (Mouse)).